A 409-amino-acid polypeptide reads, in one-letter code: Formyl-CoA:oxalate CoA-transferase (409 aa).

Residues 17 to 18, 71 to 74, 95 to 97, Arg103, and 135 to 138 contribute to the CoA site; these read QS, LNTK, NFG, and KAYE. Catalysis depends on Asp167, which acts as the Nucleophile. Residues 221 to 245 are disordered; it reads LAEYPNDDFGDEVPRSGNASGGGQP. 242-244 provides a ligand contact to substrate; that stretch reads GGQ.

It belongs to the CoA-transferase III family. Frc subfamily. As to quaternary structure, homodimer.

The catalysed reaction is formyl-CoA + oxalate = oxalyl-CoA + formate. It participates in metabolic intermediate degradation; oxalate degradation; CO(2) and formate from oxalate: step 1/2. Its function is as follows. Involved in the catabolism of oxalate and in the adapatation to low pH via the induction of the oxalate-dependent acid tolerance response (ATR). Catalyzes the transfer of the CoA moiety from formyl-CoA to oxalate. This is Formyl-CoA:oxalate CoA-transferase from Streptomyces avermitilis (strain ATCC 31267 / DSM 46492 / JCM 5070 / NBRC 14893 / NCIMB 12804 / NRRL 8165 / MA-4680).